We begin with the raw amino-acid sequence, 396 residues long: Subtilisin-like protease 5 (396 aa).

The signal sequence occupies residues Met-1–Ala-20. The propeptide occupies Ala-21 to His-116. Residues Tyr-37–Ile-113 form the Inhibitor I9 domain. The N-linked (GlcNAc...) asparagine glycan is linked to Asn-63. In terms of domain architecture, Peptidase S8 spans Pro-125–Arg-396. Catalysis depends on charge relay system residues Asp-156 and His-187. Residues Asn-230 and Asn-248 are each glycosylated (N-linked (GlcNAc...) asparagine). Catalysis depends on Ser-342, which acts as the Charge relay system. Over residues Pro-376–Leu-389 the composition is skewed to polar residues. The disordered stretch occupies residues Pro-376–Arg-396. N-linked (GlcNAc...) asparagine glycosylation is present at Asn-392.

The protein belongs to the peptidase S8 family.

It localises to the secreted. Secreted subtilisin-like serine protease with keratinolytic activity that contributes to pathogenicity. The polypeptide is Subtilisin-like protease 5 (SUB5) (Trichophyton verrucosum (Cattle ringworm fungus)).